The following is a 181-amino-acid chain: Inner membrane-spanning protein YciB (181 aa).

Transmembrane regions (helical) follow at residues 3–23 (LLFDFFPIVLFFIVYKFFGIY), 54–74 (SLAIIMVLGGATLFFQNPWFI), 81–101 (IYWLSALVFYGSGYIGSKPLI), 119–139 (LNLAWTLFFIVMGALNLYVAY), and 149–169 (FKLFGGVGFTLLFVLIQAFYL).

Belongs to the YciB family.

The protein localises to the cell inner membrane. Plays a role in cell envelope biogenesis, maintenance of cell envelope integrity and membrane homeostasis. This is Inner membrane-spanning protein YciB from Legionella pneumophila (strain Corby).